The primary structure comprises 656 residues: ATP-dependent zinc metalloprotease FtsH (656 aa).

Over 1–45 the chain is Cytoplasmic; the sequence is MAIFARRIGLNQHSAYGSRQRVIVMKNFGKKALIKQQSPKRVAWT. The helical transmembrane segment at 46 to 66 threads the bilayer; that stretch reads GALAASLIMLPTMFGGNPVLA. The Lumenal segment spans residues 67–147; sequence QKAERESLSY…EISSANSRAA (81 aa). The chain crosses the membrane as a helical span at residues 148–168; the sequence is VGLLINLMWILPLVALMLLFL. Topologically, residues 169 to 656 are cytoplasmic; that stretch reads RRSTNASSQA…DEQLSMVNSQ (488 aa). 239-246 is an ATP binding site; that stretch reads GPPGTGKT. H460 contacts Zn(2+). Residue E461 is part of the active site. The Zn(2+) site is built by H464 and D538.

The protein in the central section; belongs to the AAA ATPase family. This sequence in the C-terminal section; belongs to the peptidase M41 family. In terms of assembly, homohexamer. Zn(2+) is required as a cofactor.

It localises to the cellular thylakoid membrane. Its function is as follows. Acts as a processive, ATP-dependent zinc metallopeptidase for both cytoplasmic and membrane proteins. Plays a role in the quality control of integral membrane proteins. The polypeptide is ATP-dependent zinc metalloprotease FtsH (Nostoc sp. (strain PCC 7120 / SAG 25.82 / UTEX 2576)).